Consider the following 278-residue polypeptide: Digeranylgeranylglyceryl phosphate synthase (278 aa).

Transmembrane regions (helical) follow at residues Leu12–Phe32, Leu34–Gly54, Leu91–Val111, Ile129–Ala149, Ile153–Ile173, Phe204–Ile224, Tyr225–Val245, and Ser257–Phe277.

This sequence belongs to the UbiA prenyltransferase family. DGGGP synthase subfamily. The cofactor is Mg(2+).

Its subcellular location is the cell membrane. The catalysed reaction is sn-3-O-(geranylgeranyl)glycerol 1-phosphate + (2E,6E,10E)-geranylgeranyl diphosphate = 2,3-bis-O-(geranylgeranyl)-sn-glycerol 1-phosphate + diphosphate. The protein operates within membrane lipid metabolism; glycerophospholipid metabolism. Prenyltransferase that catalyzes the transfer of the geranylgeranyl moiety of geranylgeranyl diphosphate (GGPP) to the C2 hydroxyl of (S)-3-O-geranylgeranylglyceryl phosphate (GGGP). This reaction is the second ether-bond-formation step in the biosynthesis of archaeal membrane lipids. The chain is Digeranylgeranylglyceryl phosphate synthase from Methanococcus maripaludis (strain C7 / ATCC BAA-1331).